We begin with the raw amino-acid sequence, 428 residues long: 3-phosphoshikimate 1-carboxyvinyltransferase (428 aa).

Residues Lys23, Ser24, and Arg28 each coordinate 3-phosphoshikimate. Residue Lys23 participates in phosphoenolpyruvate binding. The phosphoenolpyruvate site is built by Gly92 and Arg120. 4 residues coordinate 3-phosphoshikimate: Ser165, Gln167, Asp312, and Lys339. Gln167 contacts phosphoenolpyruvate. The active-site Proton acceptor is Asp312. Residues Arg343 and Arg384 each contribute to the phosphoenolpyruvate site.

Belongs to the EPSP synthase family. Monomer.

The protein localises to the cytoplasm. The enzyme catalyses 3-phosphoshikimate + phosphoenolpyruvate = 5-O-(1-carboxyvinyl)-3-phosphoshikimate + phosphate. It functions in the pathway metabolic intermediate biosynthesis; chorismate biosynthesis; chorismate from D-erythrose 4-phosphate and phosphoenolpyruvate: step 6/7. Functionally, catalyzes the transfer of the enolpyruvyl moiety of phosphoenolpyruvate (PEP) to the 5-hydroxyl of shikimate-3-phosphate (S3P) to produce enolpyruvyl shikimate-3-phosphate and inorganic phosphate. In Sulfurimonas denitrificans (strain ATCC 33889 / DSM 1251) (Thiomicrospira denitrificans (strain ATCC 33889 / DSM 1251)), this protein is 3-phosphoshikimate 1-carboxyvinyltransferase.